Reading from the N-terminus, the 628-residue chain is Biosynthetic arginine decarboxylase (628 aa).

An N6-(pyridoxal phosphate)lysine modification is found at K101. 281-291 (VDVGGGLGVDY) serves as a coordination point for substrate.

The protein belongs to the Orn/Lys/Arg decarboxylase class-II family. SpeA subfamily. Requires Mg(2+) as cofactor. It depends on pyridoxal 5'-phosphate as a cofactor.

It carries out the reaction L-arginine + H(+) = agmatine + CO2. It participates in amine and polyamine biosynthesis; agmatine biosynthesis; agmatine from L-arginine: step 1/1. Its function is as follows. Catalyzes the biosynthesis of agmatine from arginine. This chain is Biosynthetic arginine decarboxylase, found in Alkalilimnicola ehrlichii (strain ATCC BAA-1101 / DSM 17681 / MLHE-1).